The primary structure comprises 484 residues: tRNA sulfurtransferase (484 aa).

One can recognise a THUMP domain in the interval 63–167; it reads REMIERLCCT…DQRLFVVHRQ (105 aa). ATP contacts are provided by residues 185 to 186, Lys267, Gly289, and Gln298; that span reads LM. Cys346 and Cys457 are disulfide-bonded. Positions 405–483 constitute a Rhodanese domain; sequence ALAGQIVLDI…GHANVRVYRP (79 aa). Cys457 (cysteine persulfide intermediate) is an active-site residue.

The protein belongs to the ThiI family.

The protein resides in the cytoplasm. The enzyme catalyses [ThiI sulfur-carrier protein]-S-sulfanyl-L-cysteine + a uridine in tRNA + 2 reduced [2Fe-2S]-[ferredoxin] + ATP + H(+) = [ThiI sulfur-carrier protein]-L-cysteine + a 4-thiouridine in tRNA + 2 oxidized [2Fe-2S]-[ferredoxin] + AMP + diphosphate. The catalysed reaction is [ThiS sulfur-carrier protein]-C-terminal Gly-Gly-AMP + S-sulfanyl-L-cysteinyl-[cysteine desulfurase] + AH2 = [ThiS sulfur-carrier protein]-C-terminal-Gly-aminoethanethioate + L-cysteinyl-[cysteine desulfurase] + A + AMP + 2 H(+). It functions in the pathway cofactor biosynthesis; thiamine diphosphate biosynthesis. Functionally, catalyzes the ATP-dependent transfer of a sulfur to tRNA to produce 4-thiouridine in position 8 of tRNAs, which functions as a near-UV photosensor. Also catalyzes the transfer of sulfur to the sulfur carrier protein ThiS, forming ThiS-thiocarboxylate. This is a step in the synthesis of thiazole, in the thiamine biosynthesis pathway. The sulfur is donated as persulfide by IscS. The chain is tRNA sulfurtransferase from Azotobacter vinelandii (strain DJ / ATCC BAA-1303).